The following is a 260-amino-acid chain: Thrombin-like enzyme 2 (260 aa).

An N-terminal signal peptide occupies residues 1-18 (MMLIRVLANLLILQLSYA). Positions 19-24 (QKSSEL) are excised as a propeptide. A Peptidase S1 domain is found at 25 to 251 (VIGGDECNIN…HLDWIQSIIA (227 aa)). 6 cysteine pairs are disulfide-bonded: Cys-31–Cys-165, Cys-52–Cys-68, Cys-102–Cys-258, Cys-144–Cys-212, Cys-176–Cys-191, and Cys-202–Cys-227. His-67 (charge relay system) is an active-site residue. An N-linked (GlcNAc...) asparagine glycan is attached at Asn-105. Asp-112 (charge relay system) is an active-site residue. 2 N-linked (GlcNAc...) asparagine glycosylation sites follow: Asn-156 and Asn-172. The active-site Charge relay system is Ser-206. Residue Asn-253 is glycosylated (N-linked (GlcNAc...) asparagine).

Belongs to the peptidase S1 family. Snake venom subfamily. In terms of assembly, monomer. In terms of tissue distribution, expressed by the venom gland.

It is found in the secreted. Thrombin-like snake venom serine protease. The sequence is that of Thrombin-like enzyme 2 from Trimeresurus albolabris (White-lipped pit viper).